We begin with the raw amino-acid sequence, 975 residues long: Leucine-zipper-like transcriptional regulator 1 homolog (975 aa).

A compositionally biased stretch (gly residues) spans 16 to 32 (RGGGGGGCGGGGAGGSA). Disordered regions lie at residues 16-41 (RGGG…TSGS) and 158-186 (MSSS…SCSS). The span at 174–186 (ASSSHPPGSSCSS) shows a compositional bias: low complexity. Kelch repeat units lie at residues 263-312 (AMFV…VAGS), 314-369 (MFIF…VYDN), 370-417 (KMWI…PVAV), 421-467 (AMYV…PSRR), 478-524 (FLYV…FHAS), and 530-581 (AMYI…FIVG). 2 consecutive BTB domains span residues 574–670 (CDIQ…DLKD) and 801–870 (CDIS…KMPP).

The protein belongs to the LZTR1 family. In terms of assembly, component of some BCR (BTB-CUL3-RBX1) E3 ubiquitin-protein ligase complex. As to expression, expressed in Rdl-expressing neurons of the mushroom body, the neurons projecting to the LC9 optic glomerulus and in a neuronal cluster near the subesophageal ganglion (at protein level).

The protein operates within protein modification; protein ubiquitination. Functionally, inhibitor of Ras signaling. Acts as a substrate-specific adapter of a BCR (BTB-CUL3-RBX1) E3 ubiquitin-protein ligase complex that mediates ubiquitination of Ras. Together with Nf1, plays an important role for normal sleep behavior, mainly during the night. Might affect sleep by modulating GABA signaling in Rdl-expressing neurons. Might play a role in the regulation of brain glycogen metabolism and organismal levels of triglycerides. The protein is Leucine-zipper-like transcriptional regulator 1 homolog of Drosophila melanogaster (Fruit fly).